Consider the following 899-residue polypeptide: Calcium-transporting ATPase 1 (899 aa).

The next 4 helical transmembrane spans lie at 59–79 (FVKD…VTLG), 80–100 (NIDD…VGFV), 247–267 (QLSL…FFQG), and 282–302 (VAAI…LGVL). The 4-aspartylphosphate intermediate role is filled by Asp329. The next 4 membrane-spanning stretches (helical) occupy residues 688–708 (FQLS…VFGF), 757–777 (QLLQ…IVVF), 827–847 (FNIA…ASPF), and 854–874 (EAIG…VLWV). Ser892 is subject to Phosphoserine.

It belongs to the cation transport ATPase (P-type) (TC 3.A.3) family.

It localises to the endoplasmic reticulum membrane. The enzyme catalyses Ca(2+)(in) + ATP + H2O = Ca(2+)(out) + ADP + phosphate + H(+). Transports calcium and manganese ions into the cell. Regulates cell morphogenesis through control of manganese and calcium homeostasis. This is Calcium-transporting ATPase 1 (pmr1) from Schizosaccharomyces pombe (strain 972 / ATCC 24843) (Fission yeast).